We begin with the raw amino-acid sequence, 146 residues long: Anti-sigma F factor (146 aa).

It belongs to the anti-sigma-factor family.

The enzyme catalyses L-seryl-[protein] + ATP = O-phospho-L-seryl-[protein] + ADP + H(+). It catalyses the reaction L-threonyl-[protein] + ATP = O-phospho-L-threonyl-[protein] + ADP + H(+). Binds to sigma F and blocks its ability to form an RNA polymerase holoenzyme (E-sigma F). Phosphorylates SpoIIAA on a serine residue. This phosphorylation may enable SpoIIAA to act as an anti-anti-sigma factor that counteracts SpoIIAB and thus releases sigma F from inhibition. The protein is Anti-sigma F factor of Geobacillus kaustophilus (strain HTA426).